The sequence spans 60 residues: UPF0434 protein KPK_3615 (60 aa).

Belongs to the UPF0434 family.

This chain is UPF0434 protein KPK_3615, found in Klebsiella pneumoniae (strain 342).